A 677-amino-acid chain; its full sequence is mRNA 3'-end-processing protein RNA14 (677 aa).

HAT repeat units follow at residues 56–88 (ESYA…GELA), 90–124 (DEFE…YIRR), 138–170 (VIVK…FLEQ), 181–214 (QRID…WEQE), 257–289 (RTAN…WERE), and 298–330 (MLSQ…YISE).

In terms of assembly, component of the CFIA complex, which is composed of RNA14, RNA15, PCF11 and CLP1. Interacts with FIP1, PFS2, YSH1 and probably also with RNA15. Probably interacts with the phosphorylated CTD domain of RPB1/RNA polymerase II.

It is found in the nucleus. It localises to the cytoplasm. Component of the cleavage factor IA (CFIA) complex, which is involved in the endonucleolytic cleavage during polyadenylation-dependent pre-mRNA 3'-end formation and cooperates with the cleavage factor NAB4/CFIB and the cleavage and polyadenylation factor (CPF) complex. The protein is mRNA 3'-end-processing protein RNA14 (RNA14) of Saccharomyces cerevisiae (strain ATCC 204508 / S288c) (Baker's yeast).